The primary structure comprises 589 residues: Zinc finger protein 131 (589 aa).

A BTB domain is found at 34-98; the sequence is TDITLIVDGH…TYTAKLMIQG (65 aa). The Nuclear localization signal 1 motif lies at 137-148; sequence TGKNEAKKRKIA. Over residues 224–234 the composition is skewed to basic and acidic residues; it reads GDRKGQIKEDG. The tract at residues 224–247 is disordered; the sequence is GDRKGQIKEDGCPSDPTSKQEHMK. 2 C2H2-type zinc fingers span residues 254–277 and 294–316; these read FKCE…NCYH and HVCQ…LRKH. Glycyl lysine isopeptide (Lys-Gly) (interchain with G-Cter in SUMO2) cross-links involve residues K255 and K261. The Nuclear localization signal 2 signature appears at 283–294; sequence VSKKQRTGKKIH. The segment at 322–347 adopts a C2H2-type 3; degenerate zinc-finger fold; sequence FECPNCHERFARNSTLKCHLTACQTG. 2 C2H2-type zinc fingers span residues 358–380 and 386–409; these read YECQ…LVIH and NHCT…SDAH. The span at 539–583 shows a compositional bias: basic and acidic residues; that stretch reads NQEERESSQADAAEAAREDHEDAEDLETKPTVDSEAEKAENEDRT. Residues 539-589 are disordered; that stretch reads NQEERESSQADAAEAAREDHEDAEDLETKPTVDSEAEKAENEDRTAMPVLE. Residue K567 forms a Glycyl lysine isopeptide (Lys-Gly) (interchain with G-Cter in SUMO) linkage.

It belongs to the krueppel C2H2-type zinc-finger protein family. Monosumoylated at Lys-567 by CBX4 and UHRF2. Sumoylation may potentiate ZNF131 inhibition of estrogen signaling. Sumoylation does not interfere with ubiquitination. In terms of processing, ubiquitinated.

The protein resides in the nucleus. Functionally, may be involved in transcriptional regulation as a repressor of ESR1/ER-alpha signaling. Plays a role during development and organogenesis as well as in the function of the adult central nervous system. The chain is Zinc finger protein 131 (ZNF131) from Pongo abelii (Sumatran orangutan).